The following is a 225-amino-acid chain: J-type co-chaperone jac1, mitochondrial (225 aa).

Residues 1 to 49 (MLKQAGNQSFRPFISFAQKSLFNRQITGNHWIFARFKFYPLNKIVNYNH) constitute a mitochondrion transit peptide. Residues 61-137 (NFYKQFEGDI…LTRAEYILQL (77 aa)) enclose the J domain. Positions 98 to 100 (HPD) match the HSP70 binding motif.

It belongs to the HscB family. As to quaternary structure, interacts with ssc1.

The protein resides in the mitochondrion matrix. Co-chaperone required for the assembly of iron-sulfur (Fe/S) clusters in mitochondria. Stimulates the ATPase activity of the mitochondrial Hsp70 chaperone ssc1, to mediate the transfer of iron-sulfur clusters from isu1 to grx5. This Schizosaccharomyces pombe (strain 972 / ATCC 24843) (Fission yeast) protein is J-type co-chaperone jac1, mitochondrial.